A 379-amino-acid chain; its full sequence is Class V chitinase (379 aa).

Residues 1–24 (MSSTKLISLIVSITFFLTLQCSMA) form the signal peptide. One can recognise a GH18 domain in the interval 27–369 (VVKASYWFPA…RAASQAWDAT (343 aa)). Position 99 (glycine 99) interacts with chitin. Catalysis depends on glutamate 140, which acts as the Proton donor. Tyrosine 259 contributes to the chitin binding site. Asparagine 307 and asparagine 327 each carry an N-linked (GlcNAc...) asparagine glycan. A chitin-binding site is contributed by tryptophan 348.

This sequence belongs to the glycosyl hydrolase 18 family. Chitinase class V subfamily.

It carries out the reaction Random endo-hydrolysis of N-acetyl-beta-D-glucosaminide (1-&gt;4)-beta-linkages in chitin and chitodextrins.. The catalysed reaction is Hydrolysis of N,N'-diacetylchitobiose from the non-reducing end of chitin and chitodextrins.. It functions in the pathway glycan degradation; chitin degradation. Functionally, can hydrolyze glycol chitin and chitin oligosaccharides (e.g. N-acetylglucosamine) (GlcNAc)4, (GlcNAc)5 and (GlcNAc)6. Hydrolyzes N-acetylglucosamine oligomers producing dimers from the non-reducing end of the substrates. The sequence is that of Class V chitinase from Arabidopsis thaliana (Mouse-ear cress).